Consider the following 106-residue polypeptide: Cell division protein FtsL (106 aa).

Topologically, residues 1-22 (MPRQSPPNLAKLIALDLLTVGR) are cytoplasmic. A helical membrane pass occupies residues 23–43 (VPLLLLVLIFSCAMGVVFMTH). Over 44–106 (HTRQAISAKD…SDKEVVINLK (63 aa)) the chain is Periplasmic.

Belongs to the FtsL family. In terms of assembly, part of a complex composed of FtsB, FtsL and FtsQ.

The protein localises to the cell inner membrane. In terms of biological role, essential cell division protein. May link together the upstream cell division proteins, which are predominantly cytoplasmic, with the downstream cell division proteins, which are predominantly periplasmic. The polypeptide is Cell division protein FtsL (Vibrio cholerae serotype O1 (strain ATCC 39315 / El Tor Inaba N16961)).